A 500-amino-acid chain; its full sequence is Probable serine carboxypeptidase CPVL (500 aa).

The N-terminal stretch at 1-23 (MKVSLSFLLTILIVIITIKVNLS) is a signal peptide. Residues Asn110 and Asn161 are each glycosylated (N-linked (GlcNAc...) asparagine). Ser233 is a catalytic residue. 2 N-linked (GlcNAc...) asparagine glycosylation sites follow: Asn333 and Asn360. Residues Asp414 and His474 contribute to the active site.

The protein belongs to the peptidase S10 family.

It localises to the secreted. In terms of biological role, may be involved in the digestion of phagocytosed particles in the lysosome, participation in an inflammatory protease cascade, and trimming of peptides for antigen presentation. The polypeptide is Probable serine carboxypeptidase CPVL (cpvl) (Dictyostelium discoideum (Social amoeba)).